The primary structure comprises 244 residues: MIVIPAIDLREGRCVRLFRGDFARATVYSDDPIEMAQRWASAGARWLHVVDLDGARLGQPVQHELIERVIRAVPDVAVQVGGGVRTLDAVERLLVGGAARVVIGTAALERPDMLREALARFGVERVVVAVDSRDGWVATHGWETVQAIRVEEVVHRVVLLGVRRVLATDVTRDGTLTRPNLELMGRLAALGVTVIASGGVGSRSDLEALARVPGVEAAIVGRALYEGRVRFERPEDWVIGAEAA.

The active-site Proton acceptor is Asp8. The active-site Proton donor is the Asp131.

Belongs to the HisA/HisF family.

Its subcellular location is the cytoplasm. It carries out the reaction 1-(5-phospho-beta-D-ribosyl)-5-[(5-phospho-beta-D-ribosylamino)methylideneamino]imidazole-4-carboxamide = 5-[(5-phospho-1-deoxy-D-ribulos-1-ylimino)methylamino]-1-(5-phospho-beta-D-ribosyl)imidazole-4-carboxamide. It functions in the pathway amino-acid biosynthesis; L-histidine biosynthesis; L-histidine from 5-phospho-alpha-D-ribose 1-diphosphate: step 4/9. This chain is 1-(5-phosphoribosyl)-5-[(5-phosphoribosylamino)methylideneamino] imidazole-4-carboxamide isomerase, found in Thermomicrobium roseum (strain ATCC 27502 / DSM 5159 / P-2).